The sequence spans 681 residues: Spermatogenesis-associated protein 21 (681 aa).

The segment covering Met-1–Ala-14 has biased composition (basic and acidic residues). 2 disordered regions span residues Met-1–Arg-284 and Glu-298–Leu-336. Composition is skewed to polar residues over residues Gln-83–Asp-94 and Pro-159–Ser-173. Residues Pro-251–Leu-261 show a composition bias toward basic and acidic residues. Residues Gly-264 to Ala-281 are compositionally biased toward polar residues. Positions Thr-319–Thr-335 are enriched in low complexity. An EF-hand domain is found at Phe-464 to Phe-499. 5 residues coordinate Ca(2+): Asp-477, Asn-479, Asp-481, His-483, and Asp-488. The tract at residues Leu-653 to His-681 is disordered. Positions Ser-662 to Lys-671 are enriched in basic and acidic residues.

Its function is as follows. Involved in the differentiation of haploid spermatids. The protein is Spermatogenesis-associated protein 21 (Spata21) of Mus musculus (Mouse).